A 229-amino-acid polypeptide reads, in one-letter code: Uracil-DNA glycosylase (229 aa).

Aspartate 64 functions as the Proton acceptor in the catalytic mechanism.

Belongs to the uracil-DNA glycosylase (UDG) superfamily. UNG family.

It localises to the cytoplasm. The enzyme catalyses Hydrolyzes single-stranded DNA or mismatched double-stranded DNA and polynucleotides, releasing free uracil.. Its function is as follows. Excises uracil residues from the DNA which can arise as a result of misincorporation of dUMP residues by DNA polymerase or due to deamination of cytosine. This chain is Uracil-DNA glycosylase, found in Salmonella choleraesuis (strain SC-B67).